We begin with the raw amino-acid sequence, 235 residues long: Sugar fermentation stimulation protein homolog (235 aa).

It belongs to the SfsA family.

This chain is Sugar fermentation stimulation protein homolog, found in Photorhabdus laumondii subsp. laumondii (strain DSM 15139 / CIP 105565 / TT01) (Photorhabdus luminescens subsp. laumondii).